The chain runs to 257 residues: Acetylglutamate kinase (257 aa).

Residues 41–42, arginine 63, and asparagine 158 contribute to the substrate site; that span reads GG.

Belongs to the acetylglutamate kinase family. ArgB subfamily.

The protein localises to the cytoplasm. It catalyses the reaction N-acetyl-L-glutamate + ATP = N-acetyl-L-glutamyl 5-phosphate + ADP. The protein operates within amino-acid biosynthesis; L-arginine biosynthesis; N(2)-acetyl-L-ornithine from L-glutamate: step 2/4. In terms of biological role, catalyzes the ATP-dependent phosphorylation of N-acetyl-L-glutamate. This Phocaeicola vulgatus (strain ATCC 8482 / DSM 1447 / JCM 5826 / CCUG 4940 / NBRC 14291 / NCTC 11154) (Bacteroides vulgatus) protein is Acetylglutamate kinase.